A 90-amino-acid chain; its full sequence is Small ribosomal subunit protein uS15 (90 aa).

This sequence belongs to the universal ribosomal protein uS15 family. Part of the 30S ribosomal subunit. Forms a bridge to the 50S subunit in the 70S ribosome, contacting the 23S rRNA.

Functionally, one of the primary rRNA binding proteins, it binds directly to 16S rRNA where it helps nucleate assembly of the platform of the 30S subunit by binding and bridging several RNA helices of the 16S rRNA. In terms of biological role, forms an intersubunit bridge (bridge B4) with the 23S rRNA of the 50S subunit in the ribosome. This is Small ribosomal subunit protein uS15 from Aliarcobacter butzleri (strain RM4018) (Arcobacter butzleri).